The following is a 401-amino-acid chain: Hemorrhagic metalloproteinase-disintegrin-like kaouthiagin (401 aa).

The Peptidase M12B domain maps to 14 to 208 (KYIEFYVIVD…DRPQCILNKP (195 aa)). The Ca(2+) site is built by Glu17 and Asp101. N-linked (GlcNAc...) asparagine glycosylation occurs at Asn112. Cystine bridges form between Cys125/Cys203, Cys164/Cys187, and Cys166/Cys171. His149 is a Zn(2+) binding site. Glu150 is a catalytic residue. Positions 153 and 159 each coordinate Zn(2+). 8 residues coordinate Ca(2+): Cys203, Asn206, Ile218, Asn221, Phe223, Glu225, Glu228, and Asp231. The region spanning 216–285 (PAICGNYFVE…ECPTDSLQRN (70 aa)) is the Disintegrin domain. 11 disulfide bridges follow: Cys219–Cys248, Cys230–Cys243, Cys232–Cys238, Cys257–Cys277, Cys264–Cys296, Cys289–Cys301, Cys308–Cys358, Cys323–Cys366, Cys336–Cys346, Cys353–Cys389, and Cys383–Cys394. Residues 263–265 (DCD) carry the D/ECD-tripeptide motif. Asp265, Leu266, Glu268, and Asp280 together coordinate Ca(2+).

The protein belongs to the venom metalloproteinase (M12B) family. P-III subfamily. P-IIIa sub-subfamily. As to quaternary structure, monomer. Zn(2+) serves as cofactor. In terms of tissue distribution, expressed by the venom gland.

The protein resides in the secreted. Snake venom zinc protease that inhibits hemostasis by binding and cleaving the vWF in humans. Also has and inhibitory effect on the collagen-induced platelet aggregation. The sequence is that of Hemorrhagic metalloproteinase-disintegrin-like kaouthiagin from Naja kaouthia (Monocled cobra).